A 133-amino-acid chain; its full sequence is Small ribosomal subunit protein uS8 (133 aa).

Belongs to the universal ribosomal protein uS8 family. Part of the 30S ribosomal subunit. Contacts proteins S5 and S12.

One of the primary rRNA binding proteins, it binds directly to 16S rRNA central domain where it helps coordinate assembly of the platform of the 30S subunit. The polypeptide is Small ribosomal subunit protein uS8 (Chlamydia caviae (strain ATCC VR-813 / DSM 19441 / 03DC25 / GPIC) (Chlamydophila caviae)).